The chain runs to 579 residues: ATP-dependent lipid A-core flippase (579 aa).

The next 5 helical transmembrane spans lie at 24–44, 63–83, 150–170, 251–271, and 275–295; these read FALSIVGLILTAATEPMLPAL, WVPLLLLGLFVLRGVASFIST, VLGLLGYLVWLNWRLTLIVFA, VIQFIAAIALAIIVFIAAGQA, and TTTVGGFVAFFMAMLLLFAPL. Residues 25-307 form the ABC transmembrane type-1 domain; that stretch reads ALSIVGLILT…LTAVNDQLQR (283 aa). Positions 339-575 constitute an ABC transporter domain; it reads LAFRDVGLTY…QGRYAQLHAL (237 aa). 373–380 is a binding site for ATP; it reads GASGSGKT.

It belongs to the ABC transporter superfamily. Lipid exporter (TC 3.A.1.106) family. As to quaternary structure, homodimer.

It is found in the cell inner membrane. The catalysed reaction is ATP + H2O + lipid A-core oligosaccharideSide 1 = ADP + phosphate + lipid A-core oligosaccharideSide 2.. In terms of biological role, involved in lipopolysaccharide (LPS) biosynthesis. Translocates lipid A-core from the inner to the outer leaflet of the inner membrane. Transmembrane domains (TMD) form a pore in the inner membrane and the ATP-binding domain (NBD) is responsible for energy generation. The protein is ATP-dependent lipid A-core flippase of Thiobacillus denitrificans (strain ATCC 25259 / T1).